Reading from the N-terminus, the 651-residue chain is Acetyl-coenzyme A synthetase (651 aa).

CoA-binding positions include 190 to 193 (RGGK), T312, and N336. ATP is bound by residues 388–390 (GEP), 412–417 (DTWWQT), D501, and R516. S524 lines the CoA pocket. R527 contacts ATP. Residues V538, H540, and V543 each contribute to the Mg(2+) site. Position 585 (R585) interacts with CoA. Residue K610 is modified to N6-acetyllysine.

This sequence belongs to the ATP-dependent AMP-binding enzyme family. The cofactor is Mg(2+). In terms of processing, acetylated. Deacetylation by the SIR2-homolog deacetylase activates the enzyme.

It carries out the reaction acetate + ATP + CoA = acetyl-CoA + AMP + diphosphate. In terms of biological role, catalyzes the conversion of acetate into acetyl-CoA (AcCoA), an essential intermediate at the junction of anabolic and catabolic pathways. AcsA undergoes a two-step reaction. In the first half reaction, AcsA combines acetate with ATP to form acetyl-adenylate (AcAMP) intermediate. In the second half reaction, it can then transfer the acetyl group from AcAMP to the sulfhydryl group of CoA, forming the product AcCoA. This chain is Acetyl-coenzyme A synthetase, found in Mesorhizobium japonicum (strain LMG 29417 / CECT 9101 / MAFF 303099) (Mesorhizobium loti (strain MAFF 303099)).